Here is a 474-residue protein sequence, read N- to C-terminus: Salutaridinol 7-O-acetyltransferase (474 aa).

The active-site Proton acceptor is the histidine 163. The segment at 213–234 is disordered; sequence ERLTSPSGMSEIPFSSTPEDTE. Positions 214 to 230 are enriched in polar residues; that stretch reads RLTSPSGMSEIPFSSTP. Aspartate 416 (proton acceptor) is an active-site residue.

Belongs to the plant acyltransferase family. In terms of tissue distribution, expressed in root, stem, leaf and capsule of the mature plant. Restricted to sieve elements of the phloem adjacent or proximal to laticifers.

The enzyme catalyses (7S)-salutaridinol + acetyl-CoA = (7S)-O-acetylsalutaridinol + CoA. Its pathway is alkaloid biosynthesis; morphine biosynthesis. In terms of biological role, acetyltransferase involved in biosynthesis of morphinan-type benzylisoquinoline and opiate alkaloids natural products. Catalyzes the conversion of the phenanthrene alkaloid salutaridinol to salutaridinol-7-O-acetate, the immediate precursor of thebaine along the morphine biosynthetic pathway. Conversion of 7-O-acetylsalutaridinol into thebaine is spontaneous. The sequence is that of Salutaridinol 7-O-acetyltransferase from Papaver somniferum (Opium poppy).